We begin with the raw amino-acid sequence, 335 residues long: Beta-ketoacyl-[acyl-carrier-protein] synthase III 3 (335 aa).

Residues Cys-114 and His-256 contribute to the active site. The ACP-binding stretch occupies residues 257–261 (QANHR). Asn-286 is a catalytic residue.

Belongs to the thiolase-like superfamily. FabH family. As to quaternary structure, homodimer.

The protein resides in the cytoplasm. The enzyme catalyses malonyl-[ACP] + acetyl-CoA + H(+) = 3-oxobutanoyl-[ACP] + CO2 + CoA. It functions in the pathway lipid metabolism; fatty acid biosynthesis. Catalyzes the condensation reaction of fatty acid synthesis by the addition to an acyl acceptor of two carbons from malonyl-ACP. Catalyzes the first condensation reaction which initiates fatty acid synthesis and may therefore play a role in governing the total rate of fatty acid production. Possesses both acetoacetyl-ACP synthase and acetyl transacylase activities. Its substrate specificity determines the biosynthesis of branched-chain and/or straight-chain of fatty acids. In Streptomyces coelicolor (strain ATCC BAA-471 / A3(2) / M145), this protein is Beta-ketoacyl-[acyl-carrier-protein] synthase III 3.